The following is a 130-amino-acid chain: Con-Ins M1 (130 aa).

The first 21 residues, 1–21, serve as a signal peptide directing secretion; it reads MTTSSYFLLVALGLLLYVCQS. 4 disulfides stabilise this stretch: Cys-29-Cys-107, Cys-41-Cys-110, Cys-53-Cys-123, and Cys-109-Cys-114. A 4-hydroxyproline; partial modification is found at Pro-34. Positions 59-92 are cleaved as a propeptide — c peptide; that stretch reads AHGGTNDARATTGRALSLSKRRGFLSMLKRRGKR. 4-carboxyglutamate; partial is present on Glu-118. Ser-129 carries the post-translational modification Serine amide.

Belongs to the insulin family. In terms of assembly, heterodimer of A and B chains; disulfide-linked. In terms of tissue distribution, expressed by the venom gland.

The protein resides in the secreted. This venom insulin facilitates prey capture by rapidly inducing hypoglycemic shock. Intraperitoneal injection of this peptide into zebrafish lowers blood glucose with the same potency than human insulin. In vivo, when applied to water, this peptide reduces overall locomotor activity of zebrafish larvae, observed as a significant decrease in the percentage of time spent swimming and movement frequency. This is Con-Ins M1 from Conus marmoreus (Marble cone).